The following is a 643-amino-acid chain: Complement component C1q receptor (643 aa).

A signal peptide spans 1 to 23 (MVTSTGLLLLLGLLGQLWAGAAA). The Extracellular portion of the chain corresponds to 24-571 (DSEAVVCEGT…HSDSDTDGQK (548 aa)). One can recognise a C-type lectin domain in the interval 31 to 173 (EGTACYTAHW…CGTPDAPGNS (143 aa)). 16 disulfides stabilise this stretch: Cys140–Cys164, Cys261–Cys272, Cys268–Cys282, Cys284–Cys297, Cys303–Cys314, Cys308–Cys325, Cys327–Cys340, Cys346–Cys355, Cys351–Cys364, Cys366–Cys380, Cys386–Cys397, Cys393–Cys406, Cys408–Cys422, Cys428–Cys437, Cys433–Cys446, and Cys448–Cys461. 2 EGF-like domains span residues 257 to 298 (PKFG…VTCA) and 299 to 341 (SRNP…VHCV). Asn322 carries N-linked (GlcNAc...) asparagine glycosylation. Residues 342-381 (DIDECEDSPCDQECINTPGGFHCECWVGYQSSGSKEEACE) enclose the EGF-like 3; calcium-binding domain. The EGF-like 4; calcium-binding domain occupies 382-423 (DVDECTAAYSPCAQGCTNTDGSFYCSCKEGYIMSGEDSTQCE). The 39-residue stretch at 424–462 (DIDECLGNPCDTLCINTDGSFRCGCPAGFELAPNGVSCT) folds into the EGF-like 5; calcium-binding domain. A disordered region spans residues 469–517 (ELPARPPQKEDKGDGKESTVPLTEMPGSLNGSKDVSNRAQTTDLSIQSD). A compositionally biased stretch (basic and acidic residues) spans 475–485 (PQKEDKGDGKE). Residues 497 to 517 (LNGSKDVSNRAQTTDLSIQSD) are compositionally biased toward polar residues. A glycan (N-linked (GlcNAc...) asparagine) is linked at Asn498. Residues 572–592 (LLLFYILGTVVAISLLLALAL) traverse the membrane as a helical segment. Over 593-643 (GLLIYLKRKAKKEEIKEKKAQNAADSYSWIPERAESRAPENQYSPTPGTDC) the chain is Cytoplasmic. The tract at residues 606–643 (EIKEKKAQNAADSYSWIPERAESRAPENQYSPTPGTDC) is disordered. Ser618 carries the phosphoserine modification. A phosphotyrosine mark is found at Tyr619 and Tyr635. The span at 631–643 (PENQYSPTPGTDC) shows a compositional bias: polar residues.

As to quaternary structure, homodimer. Interacts with C1QBP; the association may represent a cell surface C1q receptor. Interacts with surfactant protein A/SFTPA1. Interacts with multimerin-2/MMRN2. Interacts with DAG1; this interaction plays an important role in endothelial cell migration. Interacts with CBL. Interacts with IGFBP7. Interacts with VEGFR2. N- and O-glycosylated. Post-translationally, phosphorylated on Tyr-619 and Tyr-635 by SRC; these phosphorylations promote endothelial cell adhesion and migration. Widely expressed. Highly expressed in lung and heart. Expressed at lower level in brain, thymus, liver, spleen, intestine, kidney, adrenal gland, muscle and testis. Expressed on endothelial cells, platelets, undifferentiated monocytes and circulating natural killer cells.

It localises to the cell membrane. In terms of biological role, cell surface receptor that plays a role in various physiological processes including inflammation, phagocytosis, and cell adhesion. Plays a role in phagocytosis and enhances the uptake of apoptotic cells and immune complexes by acting as a receptor for defense collagens including surfactant protein A/SFTPA1, C1q, and mannose-binding lectin (MBL2). Plays a role in the regulation of endothelial cell function and adhesion by activating angiogenesis. Mechanistically, exerts its angiogenic function by associating with beta-dystroglycan, leading to SRC-dependent phosphorylation and subsequent recruitment of CBL. In turn, CBL provides a docking site for downstream signaling components, such as CRKL to enhance cell migration. Participates in angiogenesis also by acting as a receptor for the ECM pan-endothelial glycoprotein multimerin-2/MMRN2 and IGFBP7 ligands. Both ligands play a non-redundant role in CD93-mediated endothelial cell function. Acts as a key regulator of endothelial barrier function through modulating VEGFR2 function. The polypeptide is Complement component C1q receptor (Cd93) (Rattus norvegicus (Rat)).